A 111-amino-acid chain; its full sequence is UPF0060 membrane protein Aave_2845 (111 aa).

A run of 4 helical transmembrane segments spans residues 7 to 27 (FLLY…PWLW), 33 to 53 (SAWL…LLTL), 63 to 83 (AAYG…VDGI), and 90 to 110 (LAGA…PRGA).

The protein belongs to the UPF0060 family.

It is found in the cell inner membrane. In Paracidovorax citrulli (strain AAC00-1) (Acidovorax citrulli), this protein is UPF0060 membrane protein Aave_2845.